The following is a 206-amino-acid chain: Cytochrome c oxidase assembly factor 8 (206 aa).

The transit peptide at 1–39 directs the protein to the mitochondrion; it reads MLPCAAGARGRGAMVVLRAGKKTFLPPLCRAFACRGCQL.

It belongs to the COA8 family. N-terminal mitochondrial targeting sequence is cleaved from the mature protein once in the mitochondrion. Post-translationally, in normal conditions, the cytoplasmic precursor protein is rapidly degraded by the ubiquitination-proteasome system (UPS). Oxidative stress induces protein stabilization and import into mitochondria where it protects COX from degradation. As to expression, expressed in fibroblasts.

It localises to the mitochondrion inner membrane. Functionally, required for cytochrome c complex (COX) IV assembly and function Protects COX assembly from oxidation-induced degradation, COX being the terminal component of the mitochondrial respiratory chain. This Homo sapiens (Human) protein is Cytochrome c oxidase assembly factor 8.